We begin with the raw amino-acid sequence, 276 residues long: Large ribosomal subunit protein uL2 (276 aa).

A disordered region spans residues 224 to 276; sequence VAMNPVDHPHGGGEGKTGEGRVPVSPWGTPTKGYRTRRNKRTTSMIVQRRQKR. Residues 230-242 show a composition bias toward basic and acidic residues; it reads DHPHGGGEGKTGE.

It belongs to the universal ribosomal protein uL2 family. Part of the 50S ribosomal subunit. Forms a bridge to the 30S subunit in the 70S ribosome.

One of the primary rRNA binding proteins. Required for association of the 30S and 50S subunits to form the 70S ribosome, for tRNA binding and peptide bond formation. It has been suggested to have peptidyltransferase activity; this is somewhat controversial. Makes several contacts with the 16S rRNA in the 70S ribosome. The polypeptide is Large ribosomal subunit protein uL2 (Polynucleobacter asymbioticus (strain DSM 18221 / CIP 109841 / QLW-P1DMWA-1) (Polynucleobacter necessarius subsp. asymbioticus)).